Consider the following 447-residue polypeptide: Vasoactive intestinal polypeptide receptor (447 aa).

Residues 1–103 lie on the Extracellular side of the membrane; the sequence is MCDVVNEIEL…VDDDSFFRSV (103 aa). Intrachain disulfides connect Cys15/Cys36, Cys27/Cys69, and Cys50/Cys86. N-linked (GlcNAc...) asparagine glycans are attached at residues Asn17, Asn22, Asn64, and Asn91. A helical membrane pass occupies residues 104–128; sequence KIGYTIGHSVSLISLTTAIVILCMS. Residues 129–135 lie on the Cytoplasmic side of the membrane; it reads RKLHCTR. Residues 136–155 form a helical membrane-spanning segment; that stretch reads NYIHMHLFVSFILKAIAVFV. At 156-178 the chain is on the extracellular side; the sequence is KDAVLYDVIQESDNCSTASVGCK. Asn169 is a glycosylation site (N-linked (GlcNAc...) asparagine). A disulfide bridge links Cys177 with Cys247. Residues 179 to 202 traverse the membrane as a helical segment; sequence AVIVFFQYCIMASFFWLLVEGLYL. The Cytoplasmic portion of the chain corresponds to 203–216; it reads HALLAVSFFSERKY. Residues 217-238 form a helical membrane-spanning segment; it reads FWWYILIGWGGPTIFIMAWSFA. Residues 239–256 are Extracellular-facing; that stretch reads KAYFNDVGCWDIIENSDL. A helical membrane pass occupies residues 257-280; it reads FWWIIKTPILASILMNFILFICII. The Cytoplasmic portion of the chain corresponds to 281-305; the sequence is RILRQKINCPDIGRNESNQYSRLAK. Residues 306 to 325 form a helical membrane-spanning segment; the sequence is STLLLIPLFGINFIIFAFIP. At 326-337 the chain is on the extracellular side; sequence ENIKTELRLVFD. A helical transmembrane segment spans residues 338 to 357; sequence LILGSFQGFVVAVLYCFLNG. The Cytoplasmic segment spans residues 358–447; that stretch reads EVQAEIKRKW…KGHEDVREVS (90 aa).

It belongs to the G-protein coupled receptor 2 family.

Its subcellular location is the cell membrane. Its function is as follows. This is a receptor for VIP. The activity of this receptor is mediated by G proteins which activate adenylyl cyclase. This Carassius auratus (Goldfish) protein is Vasoactive intestinal polypeptide receptor (vipr1).